The primary structure comprises 319 residues: Acetyl esterase (319 aa).

The Involved in the stabilization of the negatively charged intermediate by the formation of the oxyanion hole motif lies at 91–93 (HGG). Residues serine 165, aspartate 262, and histidine 292 contribute to the active site.

It belongs to the 'GDXG' lipolytic enzyme family. In terms of assembly, homodimer. Interacts with MalT and MelA.

The protein resides in the cytoplasm. In terms of biological role, displays esterase activity towards short chain fatty esters (acyl chain length of up to 8 carbons). Able to hydrolyze triacetylglycerol (triacetin) and tributyrylglycerol (tributyrin), but not trioleylglycerol (triolein) or cholesterol oleate. Negatively regulates MalT activity by antagonizing maltotriose binding. Inhibits MelA galactosidase activity. The polypeptide is Acetyl esterase (Escherichia coli O139:H28 (strain E24377A / ETEC)).